Consider the following 600-residue polypeptide: Aspartate--tRNA(Asp/Asn) ligase (600 aa).

E187 is an L-aspartate binding site. The aspartate stretch occupies residues 211–214 (QIFK). 2 residues coordinate L-aspartate: R233 and H463. 233-235 (RDE) provides a ligand contact to ATP. Position 497 (E497) interacts with ATP. R504 lines the L-aspartate pocket. Residue 549 to 552 (GVDR) participates in ATP binding.

The protein belongs to the class-II aminoacyl-tRNA synthetase family. Type 1 subfamily. Homodimer.

The protein localises to the cytoplasm. It carries out the reaction tRNA(Asx) + L-aspartate + ATP = L-aspartyl-tRNA(Asx) + AMP + diphosphate. In terms of biological role, aspartyl-tRNA synthetase with relaxed tRNA specificity since it is able to aspartylate not only its cognate tRNA(Asp) but also tRNA(Asn). Reaction proceeds in two steps: L-aspartate is first activated by ATP to form Asp-AMP and then transferred to the acceptor end of tRNA(Asp/Asn). This chain is Aspartate--tRNA(Asp/Asn) ligase, found in Wolbachia pipientis wMel.